Reading from the N-terminus, the 893-residue chain is MKDLSSAEIRQMFLDFFASKGHEVVPSKNLIPQDDPTLLWINSGVATLKKYFDGTVVPNNPRITNSQKAIRTNDIENVGKTARHHTLFEMMGNFSIGDYFKEQAIPWAWELLTSPEWYGLDAEKLYVTVYPKDQEARKIWEEKTSLPDGHIYEVEDNFWDIGEGPSGPDSEIFFDRGSSFQDLPDDDPEMYPGGENERYLEIWNLVFSQFNHLPGLTDNSQYPELPHKNIDTGMGLERVVSVFQNGRTNFDTDLFLPIIRATEKLSNQFTYDDSQDSEVNTSFKVIADHIRAITFAIGDGALPSNEGRGYVIRRLLRRAVLHGQKLGIKGQFLTNLVPIVGDIMESYYPEVKANTAKIQKTVAAEEKRFNATLTGGLSLLNDVIKEAKKTGQTQISGADAFKLSDTYGFPLELTQEQAEDAGLTVDVDRYNDELQAQRVRARAARSNTKSMGVQNAVLTDLRVDSKYVGWSQTEVNHAEIVAIIGEDEQGVDALLDNADVDATVQVAFDVTPFYAEMGGQVPDFGDVLNTNGDVIAHVTDVQTAPNGQHIHTVDVISSFTLGDKVDLKVDMARHIAVSKNHTATHMLDQSLRNVLGGDVHQAGSLVEPEYLRFDFNNEGPVSSEDLDKIESMMNQEIAKNLPVTWLETDIESAKKLGAVAVFGEKYGDQVRVVSIGDFNKEFDGGTHANSTAELGLFKIVSESGIGAGVRRIEAVTGLQALSQYKAQEKALKEIATALKAQKLTDAPEKVYDLQADLRTVQRHAESLEAKLANATAGEIFNDVKTVNGHTYITAQLQVSGMDGLRQVADNWKENYPSDVLVLATVADEKVSLIVAAAPDANQSGIKAGELIKSIAPHIGGGGGGRPDMAQAGGKKPAGIPDAFAAVSAFLADK.

It belongs to the class-II aminoacyl-tRNA synthetase family.

It is found in the cytoplasm. It catalyses the reaction tRNA(Ala) + L-alanine + ATP = L-alanyl-tRNA(Ala) + AMP + diphosphate. Its function is as follows. Catalyzes the attachment of alanine to tRNA(Ala) in a two-step reaction: alanine is first activated by ATP to form Ala-AMP and then transferred to the acceptor end of tRNA(Ala). Also edits incorrectly charged Ser-tRNA(Ala) and Gly-tRNA(Ala) via its editing domain. This Leuconostoc mesenteroides subsp. mesenteroides (strain ATCC 8293 / DSM 20343 / BCRC 11652 / CCM 1803 / JCM 6124 / NCDO 523 / NBRC 100496 / NCIMB 8023 / NCTC 12954 / NRRL B-1118 / 37Y) protein is Alanine--tRNA ligase (alaS).